Here is a 65-residue protein sequence, read N- to C-terminus: Large ribosomal subunit protein bL35 (65 aa).

It belongs to the bacterial ribosomal protein bL35 family.

The sequence is that of Large ribosomal subunit protein bL35 from Nitrosomonas europaea (strain ATCC 19718 / CIP 103999 / KCTC 2705 / NBRC 14298).